A 382-amino-acid polypeptide reads, in one-letter code: Mannitol-1-phosphate 5-dehydrogenase (382 aa).

3-14 contacts NAD(+); that stretch reads ALHFGAGNIGRG. Lys-269 carries the N6-acetyllysine modification.

This sequence belongs to the mannitol dehydrogenase family.

It catalyses the reaction D-mannitol 1-phosphate + NAD(+) = beta-D-fructose 6-phosphate + NADH + H(+). In Escherichia coli O45:K1 (strain S88 / ExPEC), this protein is Mannitol-1-phosphate 5-dehydrogenase.